Consider the following 296-residue polypeptide: 4-hydroxy-tetrahydrodipicolinate synthase (296 aa).

A pyruvate-binding site is contributed by Thr47. The active-site Proton donor/acceptor is the Tyr135. Catalysis depends on Lys164, which acts as the Schiff-base intermediate with substrate. Ile207 serves as a coordination point for pyruvate.

Belongs to the DapA family. As to quaternary structure, homotetramer; dimer of dimers.

The protein resides in the cytoplasm. It carries out the reaction L-aspartate 4-semialdehyde + pyruvate = (2S,4S)-4-hydroxy-2,3,4,5-tetrahydrodipicolinate + H2O + H(+). Its pathway is amino-acid biosynthesis; L-lysine biosynthesis via DAP pathway; (S)-tetrahydrodipicolinate from L-aspartate: step 3/4. In terms of biological role, catalyzes the condensation of (S)-aspartate-beta-semialdehyde [(S)-ASA] and pyruvate to 4-hydroxy-tetrahydrodipicolinate (HTPA). This Karelsulcia muelleri (strain GWSS) (Sulcia muelleri) protein is 4-hydroxy-tetrahydrodipicolinate synthase.